A 31-amino-acid chain; its full sequence is LysM-domain containing protein (31 aa).

A LysM 1 repeat occupies 1–28 (YSPSLTDLQSYNAMNGPALKAGDILAVP).

The sequence is that of LysM-domain containing protein from Jatropha curcas (Barbados nut).